The primary structure comprises 116 residues: Ly-6/neurotoxin-like protein 1 (116 aa).

The N-terminal stretch at Met-1 to Ala-20 is a signal peptide. Positions Leu-21 to Ile-107 constitute a UPAR/Ly6 domain. Disulfide bonds link Cys-23–Cys-46, Cys-26–Cys-33, Cys-39–Cys-64, Cys-68–Cys-85, and Cys-86–Cys-91. A lipid anchor (GPI-anchor amidated cysteine) is attached at Cys-91. Positions Asn-92 to Leu-116 are cleaved as a propeptide — removed in mature form.

In terms of assembly, interacts with nAChRs containing alpha-4:beta-2 (CHRNA4:CHRNB2) and alpha-7 (CHRNA7) subunits. Interacts with CHRNA4 probably in the endoplasmic reticulum prior to nAChR pentameric assembly. Interacts with KCNA2/Potassium voltage-gated channel subfamily A member 2.

Its subcellular location is the cell membrane. The protein localises to the cell projection. The protein resides in the dendrite. It localises to the endoplasmic reticulum. Functionally, acts in different tissues through interaction to nicotinic acetylcholine receptors (nAChRs). The proposed role as modulator of nAChR activity seems to be dependent on the nAChR subtype and stoichiometry, and to involve an effect on nAChR trafficking and its cell surface expression, and on single channel properties of the nAChR inserted in the plasma membrane. Modulates functional properties of nicotinic acetylcholine receptors (nAChRs) to prevent excessive excitation, and hence neurodegeneration. Enhances desensitization by increasing both the rate and extent of desensitization of alpha-4:beta-2-containing nAChRs and slowing recovery from desensitization. Promotes large amplitude ACh-evoked currents through alpha-4:beta-2 nAChRs. Is involved in regulation of the nAChR pentameric assembly in the endoplasmic reticulum. Shifts stoichiometry from high sensitivity alpha-4(2):beta-2(3) to low sensitivity alpha-4(3):beta-2(2) nAChR. In vitro modulates alpha-3:beta-4-containing nAChRs. Reduces cell surface expression of (alpha-3:beta-4)(2):beta-4 and (alpha-3:beta-4)(2):alpha-5 nAChRs suggesting an interaction with nAChR alpha-3(-):(+)beta-4 subunit interfaces and an allosteric mode. Corresponding single channel effects characterized by decreased unitary conductance, altered burst proportions and enhanced desensitization/inactivation seem to depend on nAChR alpha:alpha subunit interfaces and are greater in (alpha-3:beta-2)(2):alpha-3 when compared to (alpha-3:beta-2)(2):alpha-5 nAChRs. Prevents plasticity in the primary visual cortex late in life. This is Ly-6/neurotoxin-like protein 1 from Homo sapiens (Human).